A 505-amino-acid polypeptide reads, in one-letter code: Bile acid-sensitive ion channel (505 aa).

Residues 1 to 30 form a binds the plasma membrane and stabilizes the channel in the closed state region; that stretch reads MEQTEKSKVYAENGLLEKIKLCLSKKPLPS. Over 1-61 the chain is Cytoplasmic; the sequence is MEQTEKSKVY…NIVQNRSKIR (61 aa). Residues 62–82 traverse the membrane as a helical segment; it reads RVLWLVVVLGSVSLVTWQIYI. Residues 83 to 459 lie on the Extracellular side of the membrane; the sequence is RLLNYFTWPT…GLFCGASLIT (377 aa). 6 cysteine pairs are disulfide-bonded: C112–C207, C185–C192, C298–C377, C315–C373, C328–C350, and C330–C342. 4 N-linked (GlcNAc...) asparagine glycosylation sites follow: N147, N163, N178, and N179. N-linked (GlcNAc...) asparagine glycosylation is present at N306. 3 N-linked (GlcNAc...) asparagine glycosylation sites follow: N370, N405, and N421. The short motif at 454–456 is the GAS motif; ion selectivity filter element; the sequence is GAS. The chain crosses the membrane as a helical span at residues 460–480; that stretch reads IIEIIEYLFTNFYWICIFFLL. The Cytoplasmic portion of the chain corresponds to 481–505; it reads KISEMTQWTPPPQNHLGNKNRIEEC.

This sequence belongs to the amiloride-sensitive sodium channel (TC 1.A.6) family. ASIC5 subfamily. Forms homotrimeric channels. In terms of tissue distribution, detected in small intestine, duodenum and jejunum. Detected at very low levels in testis and rectum.

The protein localises to the apical cell membrane. It localises to the cell membrane. The catalysed reaction is Na(+)(in) = Na(+)(out). The enzyme catalyses Li(+)(in) = Li(+)(out). It carries out the reaction K(+)(in) = K(+)(out). It catalyses the reaction H(+)(in) = H(+)(out). With respect to regulation, inhibited by the diuretic drug amiloride. Its function is as follows. Forms bile acid-gated sodium channels and may play a role in bile acid-dependent absorption and secretion by epithelial cells of the bile ducts. Displays high selectivity for sodium ions but can also permit the permeation of other cations. The gating could be indirect and the consequence of alterations of the membrane environment of the channel by bile acids. As a sodium channel of type II unipolar brush cells of the vestibulocerebellum, controlling the electrical activity of these cells, could play a role in motor coordination and balance. The sequence is that of Bile acid-sensitive ion channel from Homo sapiens (Human).